The sequence spans 136 residues: Histone H3.3C-like (136 aa).

Asymmetric dimethylarginine; by PRMT6; alternate is present on Arg3. Position 3 is a citrulline; alternate (Arg3). Thr4 carries the phosphothreonine; by HASPIN modification. Allysine; alternate is present on Lys5. N6,N6,N6-trimethyllysine; alternate is present on Lys5. Lys5 is modified (N6,N6-dimethyllysine; alternate). Lys5 carries the N6-(2-hydroxyisobutyryl)lysine; alternate modification. N6-(beta-hydroxybutyryl)lysine; alternate is present on Lys5. N6-acetyllysine; alternate is present on Lys5. Lys5 is modified (N6-methyllysine; alternate). Thr7 carries the phosphothreonine; by PKC modification. Residue Lys10 is modified to N6,N6,N6-trimethyllysine; alternate. Lys10 carries the post-translational modification N6,N6-dimethyllysine; alternate. N6-(2-hydroxyisobutyryl)lysine; alternate is present on Lys10. Position 10 is an N6-acetyllysine; alternate (Lys10). Lys10 bears the N6-methyllysine; alternate mark. Ser11 carries the ADP-ribosylserine; alternate modification. The residue at position 11 (Ser11) is a Phosphoserine; alternate; by AURKB, AURKC, RPS6KA3, RPS6KA4 and RPS6KA5. A Phosphothreonine; by PKC modification is found at Thr12. The residue at position 15 (Lys15) is an N6-(2-hydroxyisobutyryl)lysine; alternate. Residue Lys15 is modified to N6-(beta-hydroxybutyryl)lysine; alternate. An N6-acetyllysine; alternate modification is found at Lys15. Lys15 is modified (N6-glutaryllysine; alternate). At Lys15 the chain carries N6-succinyllysine; alternate. Arg18 is modified (citrulline; alternate). The residue at position 18 (Arg18) is an Asymmetric dimethylarginine; by CARM1; alternate. 2 positions are modified to N6-(2-hydroxyisobutyryl)lysine; alternate: Lys19 and Lys28. The residue at position 19 (Lys19) is an N6-(beta-hydroxybutyryl)lysine; alternate. 2 positions are modified to N6-acetyllysine; alternate: Lys19 and Lys28. N6-methyllysine; alternate is present on residues Lys19 and Lys28. An N6-glutaryllysine; alternate mark is found at Lys19 and Lys28. Lys19 bears the N6-butyryllysine; alternate mark. At Lys28 the chain carries N6,N6,N6-trimethyllysine; alternate. N6,N6-dimethyllysine; alternate is present on Lys28. The residue at position 29 (Ser29) is an ADP-ribosylserine; alternate. A Phosphoserine; alternate; by AURKB, AURKC and RPS6KA5 modification is found at Ser29. Ser32 carries the post-translational modification Phosphoserine. Residue Lys38 is modified to N6-methyllysine. A Phosphotyrosine modification is found at Tyr42. Residue Lys57 is modified to N6,N6,N6-trimethyllysine; alternate. Residue Lys57 is modified to N6-(2-hydroxyisobutyryl)lysine; alternate. The residue at position 57 (Lys57) is an N6-(beta-hydroxybutyryl)lysine; alternate. The residue at position 57 (Lys57) is an N6-acetyllysine; alternate. At Lys57 the chain carries N6-glutaryllysine; alternate. Lys57 is subject to N6-succinyllysine; alternate. At Lys57 the chain carries N6-methyllysine; by EHMT2; alternate. A Phosphoserine modification is found at Ser58. An N6-(2-hydroxyisobutyryl)lysine; alternate mark is found at Lys65 and Lys80. N6-methyllysine; alternate is present on residues Lys65 and Lys80. Lys80 bears the N6,N6,N6-trimethyllysine; alternate mark. The residue at position 80 (Lys80) is an N6,N6-dimethyllysine; alternate. Lys80 is modified (N6-acetyllysine; alternate). An N6-glutaryllysine; alternate modification is found at Lys80. An N6-succinyllysine; alternate modification is found at Lys80. Phosphothreonine is present on Thr81. Ser87 carries the post-translational modification Phosphoserine.

It belongs to the histone H3 family. In terms of assembly, the nucleosome is a histone octamer containing two molecules each of H2A, H2B, H3 and H4 assembled in one H3-H4 heterotetramer and two H2A-H2B heterodimers. The octamer wraps approximately 147 bp of DNA. In terms of processing, acetylation is generally linked to gene activation. Acetylation on Lys-19 favors methylation at Arg-18. Citrullination at Arg-18 by PADI4 impairs methylation and represses transcription. Post-translationally, asymmetric dimethylation at Arg-18 (H3R17me2a) by CARM1 is linked to gene activation. Asymmetric dimethylation at Arg-3 (H3R2me2a) by PRMT6 is linked to gene repression and is mutually exclusive with H3 Lys-5 methylation (H3K4me2 and H3K4me3). H3R2me2a is present at the 3' of genes regardless of their transcription state and is enriched on inactive promoters, while it is absent on active promoters. In terms of processing, methylation at Lys-5 (H3K4me) and Lys-80 (H3K79me) are linked to gene activation. Methylation at Lys-5 (H3K4me) facilitates subsequent acetylation of H3 and H4. Methylation at Lys-80 (H3K79me) is associated with DNA double-strand break (DSB) responses and is a specific target for TP53BP1. Methylation at Lys-10 (H3K9me) and Lys-28 (H3K27me) are linked to gene repression. Methylation at Lys-10 (H3K9me) is a specific target for HP1 proteins (CBX1, CBX3 and CBX5) and prevents subsequent phosphorylation at Ser-11 (H3S10ph) and acetylation of H3 and H4. Methylation at Lys-5 (H3K4me) and Lys-80 (H3K79me) require preliminary monoubiquitination of H2B at 'Lys-120'. Methylation at Lys-10 (H3K9me) and Lys-28 (H3K27me) are enriched in inactive X chromosome chromatin. Monomethylation at Lys-57 (H3K56me1) by EHMT2/G9A in G1 phase promotes interaction with PCNA and is required for DNA replication. Phosphorylated at Thr-4 (H3T3ph) by HASPIN during prophase and dephosphorylated during anaphase. Phosphorylation at Ser-11 (H3S10ph) by AURKB is crucial for chromosome condensation and cell-cycle progression during mitosis and meiosis. In addition phosphorylation at Ser-11 (H3S10ph) by RPS6KA4 and RPS6KA5 is important during interphase because it enables the transcription of genes following external stimulation, like mitogens, stress, growth factors or UV irradiation and result in the activation of genes, such as c-fos and c-jun. Phosphorylation at Ser-11 (H3S10ph), which is linked to gene activation, prevents methylation at Lys-10 (H3K9me) but facilitates acetylation of H3 and H4. Phosphorylation at Ser-11 (H3S10ph) by AURKB mediates the dissociation of HP1 proteins (CBX1, CBX3 and CBX5) from heterochromatin. Phosphorylation at Ser-11 (H3S10ph) is also an essential regulatory mechanism for neoplastic cell transformation. Phosphorylated at Ser-29 (H3S28ph) by MAP3K20 isoform 1, RPS6KA5 or AURKB during mitosis or upon ultraviolet B irradiation. Phosphorylation at Thr-7 (H3T6ph) by PRKCB is a specific tag for epigenetic transcriptional activation that prevents demethylation of Lys-5 (H3K4me) by LSD1/KDM1A. At centromeres, specifically phosphorylated at Thr-12 (H3T11ph) from prophase to early anaphase, by DAPK3 and PKN1. Phosphorylation at Thr-12 (H3T11ph) by PKN1 or isoform M2 of PKM (PKM2) is a specific tag for epigenetic transcriptional activation that promotes demethylation of Lys-10 (H3K9me) by KDM4C/JMJD2C. Phosphorylation at Tyr-42 (H3Y41ph) by JAK2 promotes exclusion of CBX5 (HP1 alpha) from chromatin. Post-translationally, lysine deamination at Lys-5 (H3K4all) to form allysine is mediated by LOXL2. Allysine formation by LOXL2 only takes place on H3K4me3 and results in gene repression. In terms of processing, butyrylation of histones marks active promoters and competes with histone acetylation. It is present during late spermatogenesis. Succinylation at Lys-80 (H3K79succ) by KAT2A takes place with a maximum frequency around the transcription start sites of genes. It gives a specific tag for epigenetic transcription activation. Post-translationally, serine ADP-ribosylation constitutes the primary form of ADP-ribosylation of proteins in response to DNA damage. Serine ADP-ribosylation at Ser-11 (H3S10ADPr) is mutually exclusive with phosphorylation at Ser-11 (H3S10ph) and impairs acetylation at Lys-10 (H3K9ac).

It localises to the nucleus. The protein resides in the chromosome. Functionally, core component of nucleosome. Nucleosomes wrap and compact DNA into chromatin, limiting DNA accessibility to the cellular machineries which require DNA as a template. Histones thereby play a central role in transcription regulation, DNA repair, DNA replication and chromosomal stability. DNA accessibility is regulated via a complex set of post-translational modifications of histones, also called histone code, and nucleosome remodeling. This is Histone H3.3C-like from Bos taurus (Bovine).